A 180-amino-acid chain; its full sequence is Endoribonuclease YbeY (180 aa).

Zn(2+) is bound by residues His-118, His-122, and His-128.

The protein belongs to the endoribonuclease YbeY family. The cofactor is Zn(2+).

The protein localises to the cytoplasm. Functionally, single strand-specific metallo-endoribonuclease involved in late-stage 70S ribosome quality control and in maturation of the 3' terminus of the 16S rRNA. This is Endoribonuclease YbeY from Rhodococcus opacus (strain B4).